Here is a 164-residue protein sequence, read N- to C-terminus: Arginine repressor (164 aa).

Belongs to the ArgR family.

Its subcellular location is the cytoplasm. It functions in the pathway amino-acid biosynthesis; L-arginine biosynthesis [regulation]. In terms of biological role, regulates arginine biosynthesis genes. This is Arginine repressor from Thermus thermophilus (strain ATCC BAA-163 / DSM 7039 / HB27).